Reading from the N-terminus, the 1774-residue chain is U3 small nucleolar RNA-associated protein 10 (1774 aa).

Residues 1209–1228 (TEQGKSDGDESGSEPDNDNP) are disordered. An HEAT repeat occupies 1734-1772 (LVPVIAELLEDDDEEVEQEVRTGLVKVVETVLGEPFDRY).

Belongs to the HEATR1/UTP10 family. Component of the ribosomal small subunit (SSU) processome.

It is found in the nucleus. The protein localises to the nucleolus. Functionally, involved in nucleolar processing of pre-18S ribosomal RNA. Involved in ribosome biosynthesis. The protein is U3 small nucleolar RNA-associated protein 10 of Eremothecium gossypii (strain ATCC 10895 / CBS 109.51 / FGSC 9923 / NRRL Y-1056) (Yeast).